We begin with the raw amino-acid sequence, 241 residues long: MRIPLLAPDNYAFPDPAYALAWCDGLVGVSGDLDAGRLLEAYQNGVFPWFLRDGWFFWYAVGPRAVIVPERLHVPCSLAKTLRNGSYRVAVNGCFAEVVAHCAAAARPNQDGTWIAPEFQTAYLKLHEMGYAHSFECHYPDENGKTRLAGGFYGVQIGRVFYGESMFALQPDASKIAFACAVPFLADLGVELIDCQQDTEHMRRFGSELLPFADFAERLRMLNAVPLKEEIGRREVACRGL.

The protein belongs to the L/F-transferase family.

It localises to the cytoplasm. It carries out the reaction N-terminal L-lysyl-[protein] + L-leucyl-tRNA(Leu) = N-terminal L-leucyl-L-lysyl-[protein] + tRNA(Leu) + H(+). The enzyme catalyses N-terminal L-arginyl-[protein] + L-leucyl-tRNA(Leu) = N-terminal L-leucyl-L-arginyl-[protein] + tRNA(Leu) + H(+). The catalysed reaction is L-phenylalanyl-tRNA(Phe) + an N-terminal L-alpha-aminoacyl-[protein] = an N-terminal L-phenylalanyl-L-alpha-aminoacyl-[protein] + tRNA(Phe). In terms of biological role, functions in the N-end rule pathway of protein degradation where it conjugates Leu, Phe and, less efficiently, Met from aminoacyl-tRNAs to the N-termini of proteins containing an N-terminal arginine or lysine. The chain is Leucyl/phenylalanyl-tRNA--protein transferase from Neisseria meningitidis serogroup A / serotype 4A (strain DSM 15465 / Z2491).